A 317-amino-acid polypeptide reads, in one-letter code: Beta-ketoacyl-[acyl-carrier-protein] synthase III (317 aa).

Residues Cys-112 and His-244 contribute to the active site. An ACP-binding region spans residues 245-249 (QANIR). Residue Asn-274 is part of the active site.

This sequence belongs to the thiolase-like superfamily. FabH family. In terms of assembly, homodimer.

The protein resides in the cytoplasm. The enzyme catalyses malonyl-[ACP] + acetyl-CoA + H(+) = 3-oxobutanoyl-[ACP] + CO2 + CoA. It functions in the pathway lipid metabolism; fatty acid biosynthesis. Functionally, catalyzes the condensation reaction of fatty acid synthesis by the addition to an acyl acceptor of two carbons from malonyl-ACP. Catalyzes the first condensation reaction which initiates fatty acid synthesis and may therefore play a role in governing the total rate of fatty acid production. Possesses both acetoacetyl-ACP synthase and acetyl transacylase activities. Its substrate specificity determines the biosynthesis of branched-chain and/or straight-chain of fatty acids. The protein is Beta-ketoacyl-[acyl-carrier-protein] synthase III of Rickettsia massiliae (strain Mtu5).